The following is a 387-amino-acid chain: Alpha-2B adrenergic receptor (387 aa).

A helical transmembrane segment spans residues 1–25 (AIAAVITFLILFTIFGNALVILAVL). The Cytoplasmic portion of the chain corresponds to 26-36 (TSRSLRAPQNL). A helical transmembrane segment spans residues 37-62 (FLVSLAAADILVATLIIPFSLANELL). Residues 63 to 72 (GYWYFRHTWC) lie on the Extracellular side of the membrane. Cysteines 72 and 151 form a disulfide. A helical membrane pass occupies residues 73 to 95 (XVYLALDVLFCTSSIVHLCAISL). The Cytoplasmic portion of the chain corresponds to 96-117 (DRYWAVSRALEYNSKRTPRRIK). A helical membrane pass occupies residues 118–140 (CIILTVWLIAAAISLPPLIYKGD). Residues 141 to 156 (QDPQPRGRPQCKLNQE) are Extracellular-facing. A helical membrane pass occupies residues 157–180 (AWYILSSSIGSFFVPCLIMILVYL). Over 181–351 (RIYLIAKRSS…LTREKRFTFV (171 aa)) the chain is Cytoplasmic. Positions 193 to 303 (RKPRAKGXPR…VPASPALACS (111 aa)) are disordered. Over residues 279–290 (PEEEAEEEEECG) the composition is skewed to acidic residues. The helical transmembrane segment at 352 to 375 (LAVVIGVFVLCWFPFFFSYSLGAI) threads the bilayer. Topologically, residues 376–384 (CPQHCKVPH) are extracellular. A helical transmembrane segment spans residues 385 to 387 (GLF).

This sequence belongs to the G-protein coupled receptor 1 family. Adrenergic receptor subfamily. ADRA2B sub-subfamily. In terms of assembly, interacts with RAB26. Interacts with PPP1R9B. Interacts with GGA1, GGA2 and GGA3.

It is found in the cell membrane. Alpha-2 adrenergic receptors mediate the catecholamine-induced inhibition of adenylate cyclase through the action of G proteins. The chain is Alpha-2B adrenergic receptor (ADRA2B) from Macroscelides proboscideus (Short-eared elephant shrew).